Here is a 1128-residue protein sequence, read N- to C-terminus: Scavenger receptor cysteine-rich domain superfamily protein (1128 aa).

A signal peptide spans 1–24 (MTSLRRGNICWVAVCAALLTLTRG). At 25 to 1051 (IDVIAKPSRT…VGAQAGPAGG (1027 aa)) the chain is on the extracellular side. SRCR domains are found at residues 40–140 (VQLV…VVCN), 143–245 (VRLA…VICT), 248–348 (IRLV…VICT), 351–450 (VRLV…AKCQ), 453–553 (VQLV…VVCR), 555–654 (IRLA…VVCR), 657–757 (LRLA…VVCT), 759–866 (LRLT…VLCK), and 868–968 (IRLV…VQCK). Cystine bridges form between Cys65–Cys129, Cys78–Cys139, Cys109–Cys119, Cys168–Cys234, Cys181–Cys244, Cys212–Cys222, Cys273–Cys337, Cys286–Cys347, Cys316–Cys326, Cys376–Cys439, Cys389–Cys449, Cys419–Cys429, Cys478–Cys542, Cys491–Cys552, Cys522–Cys532, Cys583–Cys644, Cys596–Cys653, Cys624–Cys634, Cys682–Cys746, Cys695–Cys756, and Cys726–Cys736. The N-linked (GlcNAc...) asparagine glycan is linked to Asn87. Residues Asn190 and Asn194 are each glycosylated (N-linked (GlcNAc...) asparagine). Residue Asn229 is glycosylated (N-linked (GlcNAc...) asparagine). N-linked (GlcNAc...) asparagine glycosylation occurs at Asn422. N-linked (GlcNAc...) asparagine glycans are attached at residues Asn601 and Asn612. Residues Asn765, Asn808, Asn834, and Asn936 are each glycosylated (N-linked (GlcNAc...) asparagine). 6 cysteine pairs are disulfide-bonded: Cys803–Cys865, Cys833–Cys843, Cys906–Cys967, Cys937–Cys947, Cys971–Cys1013, and Cys999–Cys1026. Residues 969–1028 (AGCDWPGPIRHGSFSPNRSSYDPLTTIDVKCDAGYELMGSKTLQCVTGCDWSRPTPECQR) enclose the Sushi domain. Asn985 is a glycosylation site (N-linked (GlcNAc...) asparagine). N-linked (GlcNAc...) asparagine glycosylation occurs at Asn1031. Residues 1052-1072 (VMLIIGIILGAVVMMLIACVA) traverse the membrane as a helical segment. Topologically, residues 1073 to 1128 (LYLKGRNKNIGRGNPATTSAIWKPKKEFDELKEPVLSFSAMTAGGAGPEDGMGEDI) are cytoplasmic.

As to expression, from the mid-gastrula stage, expressed only in mesenchyme cells that are migrating toward the body wall. At the brachiolaria stage, expressed in presumptive coelomocytes of the coelomic pouch. Also expressed in adult coelomocytes (at protein level).

The protein localises to the cytoplasmic vesicle membrane. Involved in aggregate formation and phagocytosis by larval mesenchyme cells and adult coelomocytes. Binds to bacteria and may act as an opsonin in the innate immune system. The polypeptide is Scavenger receptor cysteine-rich domain superfamily protein (Patiria pectinifera (Starfish)).